A 397-amino-acid chain; its full sequence is MNEQFRQALSVIETLKRHGHEAYFVGGAVRDYLLQRPIGDIDIATSAHPQEVMAIFPRTVPVGIAHGTVMVIERGISYEVTTFRKEGRYEDYRRPKDVTFVRSLNEDLQRRDFTMNAIAMNEYGEIIDPFGGVEALKQRIIETVGDPAERFNEDALRMMRALRFVSQLGFSLSTETKQAIIRYGHLLQHIAVERIAVEFEKLLLGPFVSKAIALLVETNLFAYLPELATKKEELIKLSSYSLVPVDRIEAWARFAFVVHFHREQLKNWKLSNHLIRDILICLKALEHIRSLTDWTIDALYEYGPYIPHIERIRAAVYDDKPSVHSLLKQWEMLPIRNRKELAINGHDLLILFGKKGGPWLSEMIENIERAVLHRQVENEKEKLKEWAMCNQKRENNC.

Residues Gly-27 and Arg-30 each contribute to the ATP site. 2 residues coordinate CTP: Gly-27 and Arg-30. Residues Asp-40 and Asp-42 each coordinate Mg(2+). Arg-111, Asp-154, Arg-157, Arg-160, and Arg-163 together coordinate ATP. CTP is bound by residues Arg-111, Asp-154, Arg-157, Arg-160, and Arg-163.

It belongs to the tRNA nucleotidyltransferase/poly(A) polymerase family. Bacterial CCA-adding enzyme type 3 subfamily. Homodimer. Requires Mg(2+) as cofactor.

The enzyme catalyses a tRNA precursor + 2 CTP + ATP = a tRNA with a 3' CCA end + 3 diphosphate. It carries out the reaction a tRNA with a 3' CCA end + 2 CTP + ATP = a tRNA with a 3' CCACCA end + 3 diphosphate. In terms of biological role, catalyzes the addition and repair of the essential 3'-terminal CCA sequence in tRNAs without using a nucleic acid template. Adds these three nucleotides in the order of C, C, and A to the tRNA nucleotide-73, using CTP and ATP as substrates and producing inorganic pyrophosphate. tRNA 3'-terminal CCA addition is required both for tRNA processing and repair. Also involved in tRNA surveillance by mediating tandem CCA addition to generate a CCACCA at the 3' terminus of unstable tRNAs. While stable tRNAs receive only 3'-terminal CCA, unstable tRNAs are marked with CCACCA and rapidly degraded. In Anoxybacillus flavithermus (strain DSM 21510 / WK1), this protein is CCA-adding enzyme.